The following is a 707-amino-acid chain: Alpha-hemolysin translocation ATP-binding protein HlyB (707 aa).

The Peptidase C39 domain maps to 3-125; sequence SCHKIDYGLY…ALYQGHIILI (123 aa). Residue His83 is part of the active site. The ABC transmembrane type-1 domain maps to 154-436; it reads FIETLVVSVF…LAQIWQDFQQ (283 aa). 5 helical membrane passes run 158–178, 191–211, 269–289, 295–315, and 388–408; these read LVVS…FQVV, LNVI…LSGL, ALTS…MWYY, LVIL…SPIL, and VMII…LSIG. Residues 468–703 enclose the ABC transporter domain; the sequence is ITFRNIRFRY…PESLYSYLYQ (236 aa). 502–509 is an ATP binding site; sequence GRSGSGKS.

It belongs to the ABC transporter superfamily. Protein-1 exporter (TC 3.A.1.109) family. In terms of assembly, homodimer.

It is found in the cell inner membrane. Part of the ABC transporter complex HlyBD involved in hemolysin export. Transmembrane domains (TMD) form a pore in the inner membrane and the ATP-binding domain (NBD) is responsible for energy generation. This Escherichia coli protein is Alpha-hemolysin translocation ATP-binding protein HlyB (hlyB).